The primary structure comprises 201 residues: Sorting nexin-10 (201 aa).

The segment at 8-125 (EEFVSVWVRD…SLHLFLQSHL (118 aa)) is required for interaction with ATP6V1D. A PX domain is found at 10-127 (FVSVWVRDPR…HLFLQSHLNS (118 aa)). Residues R53, K79, and R94 each coordinate a 1,2-diacyl-sn-glycero-3-phospho-(1D-myo-inositol-3-phosphate). Positions 156–201 (FPEEDEEGKKENDIDYDSESSSSGLGHSSDDSSSHGCKVNTAPQES) are disordered.

This sequence belongs to the sorting nexin family. In terms of assembly, interacts with ATP6V1D; may play a role in ciliogenesis.

The protein resides in the cytoplasm. It localises to the endosome membrane. It is found in the cytoskeleton. The protein localises to the microtubule organizing center. Its subcellular location is the centrosome. In terms of biological role, probable phosphoinositide-binding protein involved in protein sorting and membrane trafficking in endosomes. Plays a role in cilium biogenesis through regulation of the transport and the localization of proteins to the cilium. Required for the localization to the cilium of V-ATPase subunit ATP6V1D and ATP6V0D1, and RAB8A. Involved in osteoclast differentiation and therefore bone resorption. The polypeptide is Sorting nexin-10 (SNX10) (Homo sapiens (Human)).